The following is a 132-amino-acid chain: Bleomycin resistance protein (132 aa).

Positions 1 to 129 (MLQSIPALPV…DNNLISFFQQ (129 aa)) constitute a VOC domain.

It belongs to the bleomycin resistance protein family.

In terms of biological role, binding protein with a strong affinity to the bleomycin family of antibiotics. In Geobacillus stearothermophilus (Bacillus stearothermophilus), this protein is Bleomycin resistance protein (bleO).